The following is a 122-amino-acid chain: Small ribosomal subunit protein uS13 (122 aa).

The tract at residues 93 to 122 (RRGLPVRGQRTKTNARTRKGPKKTIAGKKK) is disordered.

This sequence belongs to the universal ribosomal protein uS13 family. Part of the 30S ribosomal subunit. Forms a loose heterodimer with protein S19. Forms two bridges to the 50S subunit in the 70S ribosome.

Functionally, located at the top of the head of the 30S subunit, it contacts several helices of the 16S rRNA. In the 70S ribosome it contacts the 23S rRNA (bridge B1a) and protein L5 of the 50S subunit (bridge B1b), connecting the 2 subunits; these bridges are implicated in subunit movement. Contacts the tRNAs in the A and P-sites. This chain is Small ribosomal subunit protein uS13, found in Corynebacterium urealyticum (strain ATCC 43042 / DSM 7109).